Here is a 567-residue protein sequence, read N- to C-terminus: UPF0313 protein Tpet_0582 (567 aa).

One can recognise a Radical SAM core domain in the interval 288–560 (KAIETVKFSI…NKMKENVLFK (273 aa)). Positions 303, 307, and 310 each coordinate [4Fe-4S] cluster.

It belongs to the UPF0313 family. It depends on [4Fe-4S] cluster as a cofactor.

The chain is UPF0313 protein Tpet_0582 from Thermotoga petrophila (strain ATCC BAA-488 / DSM 13995 / JCM 10881 / RKU-1).